The primary structure comprises 196 residues: Probable calcium-binding protein CML32 (196 aa).

3 consecutive EF-hand domains span residues 30–65 (LNAV…LGLV), 121–156 (DEEE…LGLP), and 159–194 (GSLA…ITVW). Ca(2+)-binding residues include Asp-43, Asn-45, Asp-47, Glu-49, Glu-54, Asp-134, Asp-136, Asp-138, Glu-145, Asp-172, Asn-174, Asp-176, Arg-178, and Glu-183.

In terms of biological role, potential calcium sensor. The polypeptide is Probable calcium-binding protein CML32 (CML32) (Oryza sativa subsp. japonica (Rice)).